The sequence spans 298 residues: 3-sulfolactaldehyde reductase (298 aa).

NAD(+) is bound by residues 11-12 (QM), Asp-31, Leu-65, and Thr-96. Arg-123 is a binding site for 2,3-dihydroxypropane-1-sulfonate. Lys-171 is an active-site residue. 174-178 (NNYMS) is a binding site for 2,3-dihydroxypropane-1-sulfonate. Lys-240 is an NAD(+) binding site.

The protein belongs to the HIBADH-related family. 3-sulfolactaldehyde reductase subfamily. In terms of assembly, homotetramer. Dimer of dimers.

It catalyses the reaction (2S)-3-sulfopropanediol + NAD(+) = (2S)-3-sulfolactaldehyde + NADH + H(+). It carries out the reaction 4-hydroxybutanoate + NAD(+) = succinate semialdehyde + NADH + H(+). With respect to regulation, inhibited by the NADH analogs tetrahydro-NADH and hexahydro-NADH. Functionally, reduces 3-sulfolactaldehyde (SLA) to 2,3-dihydroxypropane 1-sulfonate (DHPS). Metabolite profiling studies showed that the enzyme also catalyzes in vitro the NADH-dependent reduction of succinic semialdehyde (SSA) to 4-hydroxybutyrate (GHB), and that it could be involved in the metabolism of SSA, and other potentially toxic intermediates that may accumulate under stress conditions. However, the enzyme exhibits a 42,000-fold greater catalytic efficiency for the reduction of SLA over SSA. Shows no detectable activity on the analogous glycolytic intermediate glyceraldehyde-3-phosphate. In Escherichia coli (strain K12), this protein is 3-sulfolactaldehyde reductase (yihU).